Reading from the N-terminus, the 465-residue chain is MLLLWALPLLLGAVAGLEVCYERLGCFGNRIPWSGGTLERPFSTLPSTPKIVNTRFLLYTNENPNNFQEISADASTIRGSNFRTDRKTRFIIHGFTDKGEENWLSNLCENLFQVETVNCICVDWKGGSRTTYPQATQNIRIVGAEVAYLVGTLQSSLGYSPSNIHVIGHSLGAHAAGEVGRRTNGTIGRITGLDPAEPYFQGTPEIVRLDPSDAQFVDVIHTDAAPMVPNLGFGMSQTVGHLDFFPNGGKEMPGCQKNVLSQIVDINGVWEGTRDFVACNHLRSYKYYADSIVNPNGFAGFSCASYTAFSANKCFPCSNGCPQMGHYADRFSRKTDGVGQTFYLNTGDSSNFARWRYQVAVTLSGRRVTGHVLVSLYGSKGNSKQYEIFTGLLKPGDTHLNEFDSDVDVGDVQKVKFVWYNNVINPTLPKVGASQITVEQNDGRVFKFCSTDTVREDILLTLTPC.

The N-terminal stretch at 1 to 16 is a signal peptide; it reads MLLLWALPLLLGAVAG. Intrachain disulfides connect Cys-20–Cys-26 and Cys-108–Cys-119. Residue Ser-170 is the Nucleophile of the active site. Residue Asp-194 is the Charge relay system of the active site. Ca(2+) contacts are provided by Glu-205, Arg-208, Asp-210, and Asp-213. The cysteines at positions 255 and 279 are disulfide-linked. His-281 functions as the Charge relay system in the catalytic mechanism. Disulfide bonds link Cys-303/Cys-314, Cys-317/Cys-321, and Cys-449/Cys-465. Positions 355-465 constitute a PLAT domain; that stretch reads WRYQVAVTLS…EDILLTLTPC (111 aa).

This sequence belongs to the AB hydrolase superfamily. Lipase family. Forms a 1:1 stoichiometric complex with (pro)colipase/CLPS.

The protein resides in the secreted. It catalyses the reaction a triacylglycerol + H2O = a diacylglycerol + a fatty acid + H(+). The enzyme catalyses 1,2,3-tributanoylglycerol + H2O = dibutanoylglycerol + butanoate + H(+). It carries out the reaction 1,2,3-tri-(9Z-octadecenoyl)-glycerol + H2O = di-(9Z)-octadecenoylglycerol + (9Z)-octadecenoate + H(+). The catalysed reaction is all-trans-retinyl hexadecanoate + H2O = all-trans-retinol + hexadecanoate + H(+). It catalyses the reaction 1,2-di-(9Z-octadecenoyl)-glycerol + H2O = (9Z-octadecenoyl)-glycerol + (9Z)-octadecenoate + H(+). Inhibited by bile salts, is reactivated by (pro)colipase/CLPS. Plays an important role in fat metabolism. It preferentially splits the esters of long-chain fatty acids at positions 1 and 3, producing mainly 2-monoacylglycerol and free fatty acids, and shows considerably higher activity against insoluble emulsified substrates than against soluble ones. The protein is Pancreatic triacylglycerol lipase (PNLIP) of Oryctolagus cuniculus (Rabbit).